A 267-amino-acid polypeptide reads, in one-letter code: Phosphatidylglycerol--prolipoprotein diacylglyceryl transferase (267 aa).

The next 4 helical transmembrane spans lie at Val10 to Phe30, Leu54 to Tyr74, Trp90 to Phe110, and Leu116 to Gly136. Residue Arg137 coordinates a 1,2-diacyl-sn-glycero-3-phospho-(1'-sn-glycerol). Helical transmembrane passes span Pro169–Val189, Gly197–Val217, and Trp231–Val251.

It belongs to the Lgt family.

Its subcellular location is the cell inner membrane. The catalysed reaction is L-cysteinyl-[prolipoprotein] + a 1,2-diacyl-sn-glycero-3-phospho-(1'-sn-glycerol) = an S-1,2-diacyl-sn-glyceryl-L-cysteinyl-[prolipoprotein] + sn-glycerol 1-phosphate + H(+). It functions in the pathway protein modification; lipoprotein biosynthesis (diacylglyceryl transfer). Functionally, catalyzes the transfer of the diacylglyceryl group from phosphatidylglycerol to the sulfhydryl group of the N-terminal cysteine of a prolipoprotein, the first step in the formation of mature lipoproteins. This Chromohalobacter salexigens (strain ATCC BAA-138 / DSM 3043 / CIP 106854 / NCIMB 13768 / 1H11) protein is Phosphatidylglycerol--prolipoprotein diacylglyceryl transferase.